The sequence spans 308 residues: MKEEKQLDLVIIGAGPAGLTAAIYAIRAKLNTLVLENELVGGQIRETYTVENFPGFNVISGADLADKMEEHAASIGVNIDQFSNIEKIKLSDDEKIIETEDVIYKVKALIIATGAKSRRLPIPEEEKLHGKVIHYCELCDGALYQGKDLVVVGGGNSAVEAAIFLTKYARNITIVHQFDYLQAQKYSQDELFKHKNVKIIWDSEIRNIVGENEIEKIVVENVKTKQKTELKADGVFVYIGYEPKTELFKDSININKWGYIETDENMETNIKGVFAAGDVRSKLIRQLTTAVSDGTVAALMAEKYIGGK.

Cys-136 and Cys-139 form a disulfide bridge. 268-278 (TNIKGVFAAGD) provides a ligand contact to FAD.

The protein belongs to the class-II pyridine nucleotide-disulfide oxidoreductase family.

This Clostridium pasteurianum protein is 34.2 kDa protein in rubredoxin operon.